A 406-amino-acid polypeptide reads, in one-letter code: Tyrosine--tRNA ligase (406 aa).

Residue tyrosine 35 participates in L-tyrosine binding. The 'HIGH' region motif lies at 40–49; the sequence is PTADSLHVGH. Tyrosine 168 and glutamine 172 together coordinate L-tyrosine. Positions 228-232 match the 'KMSKS' region motif; the sequence is KMGKT. Lysine 231 lines the ATP pocket. Residues 340 to 405 enclose the S4 RNA-binding domain; it reads STVLDVIAKV…GKKNYNKIEI (66 aa).

This sequence belongs to the class-I aminoacyl-tRNA synthetase family. TyrS type 1 subfamily. Homodimer.

It localises to the cytoplasm. The enzyme catalyses tRNA(Tyr) + L-tyrosine + ATP = L-tyrosyl-tRNA(Tyr) + AMP + diphosphate + H(+). Functionally, catalyzes the attachment of tyrosine to tRNA(Tyr) in a two-step reaction: tyrosine is first activated by ATP to form Tyr-AMP and then transferred to the acceptor end of tRNA(Tyr). This chain is Tyrosine--tRNA ligase, found in Clostridium botulinum (strain Eklund 17B / Type B).